Consider the following 351-residue polypeptide: Dihydroorotate dehydrogenase (quinone) (351 aa).

Residues 67–71 and Thr91 contribute to the FMN site; that span reads AGFDK. Lys71 contributes to the substrate binding site. 116–120 provides a ligand contact to substrate; it reads NAMGF. FMN-binding residues include Asn145 and Asn178. Asn178 provides a ligand contact to substrate. The active-site Nucleophile is Ser181. Substrate is bound at residue Asn183. FMN contacts are provided by Lys214 and Thr242. 243–244 is a binding site for substrate; that stretch reads NT. FMN contacts are provided by residues Gly262, Gly291, and 312–313; that span reads YS.

This sequence belongs to the dihydroorotate dehydrogenase family. Type 2 subfamily. In terms of assembly, monomer. It depends on FMN as a cofactor.

The protein localises to the cell membrane. The catalysed reaction is (S)-dihydroorotate + a quinone = orotate + a quinol. It participates in pyrimidine metabolism; UMP biosynthesis via de novo pathway; orotate from (S)-dihydroorotate (quinone route): step 1/1. Catalyzes the conversion of dihydroorotate to orotate with quinone as electron acceptor. The chain is Dihydroorotate dehydrogenase (quinone) (pyrD) from Helicobacter pylori (strain ATCC 700392 / 26695) (Campylobacter pylori).